Consider the following 178-residue polypeptide: MSSFSRAPQQWATFARIWYLLDGKMQPPGKLAAMASIRLQGLHKPVYHALSDCGDHVVIMNTRHIAFSGNKWEQKVYSSHTGYPGGFRQVTAAQLHLRDPVAIVKLAIYGMLPKNLHRRTMMERLHLFPDEYIPEDILKNLVEELPQPRKIPKRLDEYTQEEIDAFPRLWTPPEDYRL.

Ser2 carries the N-acetylserine modification.

It belongs to the universal ribosomal protein uL13 family. Component of the mitochondrial large ribosomal subunit (mt-LSU). Mature mammalian 55S mitochondrial ribosomes consist of a small (28S) and a large (39S) subunit. The 28S small subunit contains a 12S ribosomal RNA (12S mt-rRNA) and 30 different proteins. The 39S large subunit contains a 16S rRNA (16S mt-rRNA), a copy of mitochondrial valine transfer RNA (mt-tRNA(Val)), which plays an integral structural role, and 52 different proteins. Interacts with OXA1L.

Its subcellular location is the mitochondrion. The chain is Large ribosomal subunit protein uL13m (MRPL13) from Homo sapiens (Human).